The chain runs to 431 residues: Beta-1,4-glucuronyltransferase 1 (431 aa).

At 1 to 11 (MHFSKKCSVFK) the chain is on the cytoplasmic side. Residues 12 to 32 (VVLSALLIVALLQLLYLSFLS) form a helical membrane-spanning segment. The Lumenal portion of the chain corresponds to 33-431 (KLHGKQQRYK…AKYPTSPRRC (399 aa)). N-linked (GlcNAc...) asparagine glycosylation is present at Asn216. Residues Asp241 and Asp243 each contribute to the Mn(2+) site. N-linked (GlcNAc...) asparagine glycosylation occurs at Asn314.

The protein belongs to the glycosyltransferase 49 family. Mn(2+) is required as a cofactor.

It is found in the golgi apparatus membrane. It catalyses the reaction 3-O-[beta-D-Xyl-(1-&gt;4)-Rib-ol-P-Rib-ol-P-3-beta-D-GalNAc-(1-&gt;3)-beta-D-GlcNAc-(1-&gt;4)-(O-6-P-alpha-D-Man)]-Thr-[protein] + UDP-alpha-D-glucuronate = 3-O-[beta-D-GlcA-(1-&gt;3)-beta-D-Xyl-(1-&gt;4)-Rib-ol-P-Rib-ol-P-3-beta-D-GalNAc-(1-&gt;3)-beta-D-GlcNAc-(1-&gt;4)-(O-6-P-alpha-D-Man)]-Thr-[protein] + UDP + H(+). It functions in the pathway protein modification; protein glycosylation. Beta-1,4-glucuronyltransferase involved in O-mannosylation of alpha-dystroglycan (DAG1). Transfers a glucuronic acid (GlcA) residue onto a xylose (Xyl) acceptor to produce the glucuronyl-beta-1,4-xylose-beta disaccharide primer, which is further elongated by LARGE, during synthesis of phosphorylated O-mannosyl glycan. Phosphorylated O-mannosyl glycan is a carbohydrate structure present in alpha-dystroglycan (DAG1), which is required for binding laminin G-like domain-containing extracellular proteins with high affinity. Required for axon guidance; via its function in O-mannosylation of alpha-dystroglycan (DAG1). In Danio rerio (Zebrafish), this protein is Beta-1,4-glucuronyltransferase 1.